Consider the following 287-residue polypeptide: uncharacterized protein (287 aa).

The tract at residues 1 to 44 (MAAPRNLTGDGGARQLVKDEESPAASSAAKGLLNDDSPTGKRTK) is disordered. The residue at position 37 (Ser37) is a Phosphoserine. A run of 5 helical transmembrane segments spans residues 55–75 (FAVF…IYLT), 124–144 (TFMI…FGVV), 147–167 (FVLV…LSKL), 218–238 (PIVD…LMPA), and 260–280 (DFKT…PALL).

Its subcellular location is the membrane. This is an uncharacterized protein from Arabidopsis thaliana (Mouse-ear cress).